The chain runs to 104 residues: MQPNEITFYQRFEADILAGRKTITIRDKSESHFKAGDILRVGRFEDNQYFCTIEVLSVSPITLDELTEQHAKQENMGLDKLKEVIKTIYPNEHESWIINFKLIG.

The 91-residue stretch at 6–96 folds into the ASCH domain; sequence ITFYQRFEAD…TIYPNEHESW (91 aa). Lys21 (proton acceptor) is an active-site residue. Thr24 serves as the catalytic Nucleophile. The active-site Proton donor is the Glu74.

It belongs to the N(4)-acetylcytidine amidohydrolase family.

The catalysed reaction is N(4)-acetylcytidine + H2O = cytidine + acetate + H(+). It carries out the reaction N(4)-acetyl-2'-deoxycytidine + H2O = 2'-deoxycytidine + acetate + H(+). The enzyme catalyses N(4)-acetylcytosine + H2O = cytosine + acetate + H(+). In terms of biological role, catalyzes the hydrolysis of N(4)-acetylcytidine (ac4C). The chain is N(4)-acetylcytidine amidohydrolase from Haemophilus influenzae (strain 86-028NP).